The primary structure comprises 414 residues: Nucleoporin NUP42 (414 aa).

The C3H1-type zinc finger occupies 1–25 (MPVCNFFLQGRCRYGDTCWNEHPTG). Disordered regions lie at residues 24–73 (TGGR…RGAA) and 200–221 (PPAS…TSGF). FG repeat units lie at residues 43 to 44 (FG), 207 to 208 (FG), 214 to 215 (FG), 221 to 222 (FG), 233 to 234 (FG), 238 to 239 (FG), 257 to 258 (FG), 268 to 269 (FG), 280 to 281 (FG), 306 to 307 (FG), 325 to 326 (FG), 329 to 330 (FG), 335 to 336 (FG), 341 to 342 (FG), 347 to 348 (FG), 351 to 352 (FG), and 362 to 363 (FG).

In terms of assembly, probable component of the nuclear pore complex (NPC).

The protein resides in the nucleus. It localises to the nuclear pore complex. Its subcellular location is the nucleus membrane. Functionally, required for the export of mRNAs containing poly(A) tails from the nucleus into the cytoplasm. The chain is Nucleoporin NUP42 (nup42) from Danio rerio (Zebrafish).